We begin with the raw amino-acid sequence, 963 residues long: Translation initiation factor IF-2 (963 aa).

The span at 53–77 shows a compositional bias: basic and acidic residues; the sequence is SHGQADDSARKKITLTKRETSEIRQ. The interval 53-377 is disordered; it reads SHGQADDSAR…RSNFQAPTEP (325 aa). A compositionally biased stretch (polar residues) spans 78–87; that stretch reads SDATGKTRTV. Basic and acidic residues-rich tracts occupy residues 98–110, 123–183, 197–250, and 267–278; these read IKRDDAAPEHQAD, EEAR…KAEE, DTSR…EAEA, and PSERKAEEKKAE. Over residues 343–356 the composition is skewed to gly residues; the sequence is SSGGVGGWRGGPRG. The 170-residue stretch at 463 to 632 folds into the tr-type G domain; the sequence is PRPPVVTVMG…SLQAEVLELK (170 aa). The tract at residues 472-479 is G1; the sequence is GHVDHGKT. 472–479 is a binding site for GTP; that stretch reads GHVDHGKT. A G2 region spans residues 497-501; it reads GITQH. Residues 518 to 521 are G3; that stretch reads DTPG. Residues 518–522 and 572–575 contribute to the GTP site; these read DTPGH and NKVD. The tract at residues 572–575 is G4; sequence NKVD. Residues 608–610 form a G5 region; it reads SAK.

The protein belongs to the TRAFAC class translation factor GTPase superfamily. Classic translation factor GTPase family. IF-2 subfamily.

The protein localises to the cytoplasm. Functionally, one of the essential components for the initiation of protein synthesis. Protects formylmethionyl-tRNA from spontaneous hydrolysis and promotes its binding to the 30S ribosomal subunits. Also involved in the hydrolysis of GTP during the formation of the 70S ribosomal complex. The chain is Translation initiation factor IF-2 from Cupriavidus taiwanensis (strain DSM 17343 / BCRC 17206 / CCUG 44338 / CIP 107171 / LMG 19424 / R1) (Ralstonia taiwanensis (strain LMG 19424)).